A 260-amino-acid polypeptide reads, in one-letter code: Flap endonuclease Xni (260 aa).

Asp104 contributes to the Mg(2+) binding site. In terms of domain architecture, 5'-3' exonuclease spans 160-250 (VSPQQLTDYW…NGNLQQLRLP (91 aa)). K(+)-binding residues include Leu171, Ala172, Pro180, Val182, and Ile185. Residues 184–189 (GIGPKS) are interaction with DNA.

The protein belongs to the Xni family. The cofactor is Mg(2+). It depends on K(+) as a cofactor.

In terms of biological role, has flap endonuclease activity. During DNA replication, flap endonucleases cleave the 5'-overhanging flap structure that is generated by displacement synthesis when DNA polymerase encounters the 5'-end of a downstream Okazaki fragment. The polypeptide is Flap endonuclease Xni (Pectobacterium atrosepticum (strain SCRI 1043 / ATCC BAA-672) (Erwinia carotovora subsp. atroseptica)).